Here is an 863-residue protein sequence, read N- to C-terminus: NACHT, LRR and PYD domains-containing protein 4B (863 aa).

A Pyrin domain is found at 1 to 93; sequence MASLFSDFGF…TNRATGEIAA (93 aa). The NACHT domain occupies 143–466; the sequence is KMVVLQGVAG…FYLLHSEMDH (324 aa). 149 to 156 contacts ATP; sequence GVAGIGKT. LRR repeat units lie at residues 618–643, 683–706, 717–740, 741–763, 765–782, 797–824, and 843–863; these read WHQICSVFLRNKDIKTLRIEDTIFNE, SYNLEELYLRGTFLSHSDVEMLCD, ILDLANCSLCEHSWDYLSDVLRQN, KSLRYLNISYNNLKDEGLKALCR, LTLPNSALHSLSLEACQL, YKCLRRINLAKNSLGFSGLFVLCKAMKD, and SQEFLLSEMERNKILSIENGV.

This sequence belongs to the NLRP family.

May be involved in inflammation and recognition of cytosolic pathogen-associated molecular patterns (PAMPs) not intercepted by membrane-bound receptors. This Mus musculus (Mouse) protein is NACHT, LRR and PYD domains-containing protein 4B (Nlrp4b).